A 337-amino-acid chain; its full sequence is Visual pigment-like receptor peropsin (337 aa).

The Extracellular portion of the chain corresponds to M1–S26. A glycan (N-linked (GlcNAc...) asparagine) is linked at N9. The helical transmembrane segment at V27 to I49 threads the bilayer. Over F50–N61 the chain is Cytoplasmic. Residues A62–L87 traverse the membrane as a helical segment. At H88–Y101 the chain is on the extracellular side. C98 and C175 form a disulfide bridge. Residues A102–M121 form a helical membrane-spanning segment. Residues D122–T140 lie on the Cytoplasmic side of the membrane. The helical transmembrane segment at Y141–A164 threads the bilayer. Residues S165–S188 are Extracellular-facing. N-linked (GlcNAc...) asparagine glycosylation occurs at N182. The chain crosses the membrane as a helical span at residues Y189 to V212. Residues S213–K240 lie on the Cytoplasmic side of the membrane. Residues M241–C264 form a helical membrane-spanning segment. At F265 to P272 the chain is on the extracellular side. The chain crosses the membrane as a helical span at residues P273–A297. Residue K284 is modified to N6-(retinylidene)lysine. The Cytoplasmic segment spans residues H298–I337.

It belongs to the G-protein coupled receptor 1 family. Opsin subfamily. In terms of tissue distribution, found only in the eye, where it is localized to the retinal pigment epithelium (RPE). In the RPE, it is localized to the microvilli that surround the photoreceptor outer segments.

It is found in the membrane. In terms of biological role, may play a role in rpe physiology either by detecting light directly or by monitoring the concentration of retinoids or other photoreceptor-derived compounds. The protein is Visual pigment-like receptor peropsin (Rrh) of Mus musculus (Mouse).